The following is a 300-amino-acid chain: 3-hydroxy-3-isohexenylglutaryl-CoA/hydroxy-methylglutaryl-CoA lyase (300 aa).

The Pyruvate carboxyltransferase domain occupies 7-274 (VRLVEVGPRD…HTGVDMHALV (268 aa)). Arg-15 provides a ligand contact to substrate. A divalent metal cation-binding residues include Asp-16, His-207, and His-209. Cys-240 is a catalytic residue. Asn-249 serves as a coordination point for a divalent metal cation.

Belongs to the HMG-CoA lyase family. In terms of assembly, homodimer. Mg(2+) is required as a cofactor. The cofactor is Mn(2+).

It catalyses the reaction 3-hydroxy-3-(4-methylpent-3-en-1-yl)glutaryl-CoA = 7-methyl-3-oxooct-6-enoyl-CoA + acetate. The catalysed reaction is (3S)-3-hydroxy-3-methylglutaryl-CoA = acetoacetate + acetyl-CoA. The protein operates within metabolic intermediate metabolism; (S)-3-hydroxy-3-methylglutaryl-CoA degradation; acetoacetate from (S)-3-hydroxy-3-methylglutaryl-CoA: step 1/1. Involved in the L-leucine, isovalerate and acyclic monoterpene catabolism. Catalyzes the cleavage of 3-hydroxy-3-methylglutaryl-CoA (HMG-CoA) to yield acetyl-CoA and acetoacetate. It can also catalyze the cleavage of 3-hydroxy-3-isohexenylglutaryl-CoA (HIHG_CoA) to yield 7-methyl-3-oxooct-6-enoyl-CoA and acetate. This is 3-hydroxy-3-isohexenylglutaryl-CoA/hydroxy-methylglutaryl-CoA lyase from Pseudomonas aeruginosa (strain ATCC 15692 / DSM 22644 / CIP 104116 / JCM 14847 / LMG 12228 / 1C / PRS 101 / PAO1).